The chain runs to 222 residues: Isoprenyl transferase (222 aa).

Residue D12 is part of the active site. D12 serves as a coordination point for Mg(2+). Substrate contacts are provided by residues 13 to 16, W17, and 57 to 59; these read GNRR and STE. The active-site Proton acceptor is the N60. Substrate-binding positions include W61, R63, R171, and 177-179; that span reads RLS. Mg(2+) is bound at residue E190.

It belongs to the UPP synthase family. Homodimer. Mg(2+) serves as cofactor.

In terms of biological role, catalyzes the condensation of isopentenyl diphosphate (IPP) with allylic pyrophosphates generating different type of terpenoids. This is Isoprenyl transferase (uppS) from Campylobacter jejuni subsp. jejuni serotype O:2 (strain ATCC 700819 / NCTC 11168).